The primary structure comprises 100 residues: Urease subunit gamma (100 aa).

It belongs to the urease gamma subunit family. Heterotrimer of UreA (gamma), UreB (beta) and UreC (alpha) subunits. Three heterotrimers associate to form the active enzyme.

The protein resides in the cytoplasm. The catalysed reaction is urea + 2 H2O + H(+) = hydrogencarbonate + 2 NH4(+). The protein operates within nitrogen metabolism; urea degradation; CO(2) and NH(3) from urea (urease route): step 1/1. The protein is Urease subunit gamma of Cyanothece sp. (strain PCC 7425 / ATCC 29141).